The primary structure comprises 259 residues: Leucine-rich repeat-containing protein 61 (259 aa).

LRR repeat units lie at residues Asn54–Arg75, Gln76–Glu97, and Asn98–Ala119. In terms of domain architecture, LRRCT spans Asn138–Asp178.

This Mus musculus (Mouse) protein is Leucine-rich repeat-containing protein 61 (Lrrc61).